The chain runs to 207 residues: dTDP-4-dehydrorhamnose 3-epimerase (207 aa).

Substrate contacts are provided by residues arginine 23, aspartate 28, 47–49 (QAN), and arginine 59. The Proton acceptor role is filled by histidine 62. Residues lysine 72 and histidine 119 each contribute to the substrate site. Tyrosine 132 serves as the catalytic Proton donor. 2 residues coordinate substrate: glutamate 143 and arginine 167.

It belongs to the dTDP-4-dehydrorhamnose 3,5-epimerase family.

It functions in the pathway antibiotic biosynthesis; novobiocin biosynthesis. Functionally, dTDP-6-deoxy-D-xylo-4-hexulose 3-epimerase that acts together with NovU to catalyze the formation of dTDP-4-keto-6-deoxy-5-C-methyl-L-lyxo-hexose from dTDP-4-keto-6-deoxy-D-glucose in the novobiocin biosynthesis pathway, an aminocoumarin family antibiotic that targets bacterial DNA gyrases. This chain is dTDP-4-dehydrorhamnose 3-epimerase, found in Streptomyces niveus (Streptomyces spheroides).